Consider the following 192-residue polypeptide: Sarcoplasmic calcium-binding protein, alpha-B and -A chains (192 aa).

Alanine 1 is modified (N-acetylalanine). EF-hand domains lie at 4-39 (WDNR…NTLI), 56-91 (IMRN…HCQG), 100-135 (AFKV…RSAF), and 136-171 (AEVK…YAQF). Aspartate 17, aspartate 19, aspartate 21, aspartate 28, aspartate 69, asparagine 71, aspartate 73, glutamate 75, glutamate 80, aspartate 113, asparagine 115, aspartate 117, lysine 119, and glutamate 124 together coordinate Ca(2+).

In terms of assembly, SCPs from crayfish, lobster, and shrimp are polymorphic dimers; three isotypes (alpha-alpha, alpha-beta, and beta-beta) have been identified.

Its function is as follows. Like parvalbumins, SCPs seem to be more abundant in fast contracting muscles, but no functional relationship can be established from this distribution. This chain is Sarcoplasmic calcium-binding protein, alpha-B and -A chains, found in Penaeus sp. (Penoeid shrimp).